The chain runs to 156 residues: Small ribosomal subunit protein uS7 (156 aa).

It belongs to the universal ribosomal protein uS7 family. In terms of assembly, part of the 30S ribosomal subunit. Contacts proteins S9 and S11.

Its function is as follows. One of the primary rRNA binding proteins, it binds directly to 16S rRNA where it nucleates assembly of the head domain of the 30S subunit. Is located at the subunit interface close to the decoding center, probably blocks exit of the E-site tRNA. This Bacillus cereus (strain ZK / E33L) protein is Small ribosomal subunit protein uS7.